A 660-amino-acid chain; its full sequence is uncharacterized protein (660 aa).

A disordered region spans residues 220-239 (ADARGQAAAPPQAQAPAPPD). Low complexity predominate over residues 222–239 (ARGQAAAPPQAQAPAPPD).

This is an uncharacterized protein from Callospermophilus lateralis (Golden-mantled ground squirrel).